A 278-amino-acid polypeptide reads, in one-letter code: 4-diphosphocytidyl-2-C-methyl-D-erythritol kinase (278 aa).

Residue lysine 10 is part of the active site. Residue 93-103 participates in ATP binding; the sequence is PMGGGLGGGSS. Aspartate 135 is an active-site residue.

The protein belongs to the GHMP kinase family. IspE subfamily.

It carries out the reaction 4-CDP-2-C-methyl-D-erythritol + ATP = 4-CDP-2-C-methyl-D-erythritol 2-phosphate + ADP + H(+). It functions in the pathway isoprenoid biosynthesis; isopentenyl diphosphate biosynthesis via DXP pathway; isopentenyl diphosphate from 1-deoxy-D-xylulose 5-phosphate: step 3/6. Catalyzes the phosphorylation of the position 2 hydroxy group of 4-diphosphocytidyl-2C-methyl-D-erythritol. This Thiobacillus denitrificans (strain ATCC 25259 / T1) protein is 4-diphosphocytidyl-2-C-methyl-D-erythritol kinase.